Consider the following 352-residue polypeptide: Photosystem II protein D1 (352 aa).

Threonine 2 is modified (N-acetylthreonine). Residue threonine 2 is modified to Phosphothreonine. The next 3 membrane-spanning stretches (helical) occupy residues tyrosine 29–serine 46, histidine 118–leucine 133, and tryptophan 142–alanine 156. Histidine 118 provides a ligand contact to chlorophyll a. Pheophytin a is bound at residue tyrosine 126. Residues aspartate 170 and glutamate 189 each coordinate [CaMn4O5] cluster. The chain crosses the membrane as a helical span at residues phenylalanine 197–leucine 218. Histidine 198 contacts chlorophyll a. Residues histidine 215 and serine 264–phenylalanine 265 each bind a quinone. Histidine 215 contributes to the Fe cation binding site. Histidine 272 lines the Fe cation pocket. The helical transmembrane segment at phenylalanine 274 to leucine 288 threads the bilayer. [CaMn4O5] cluster contacts are provided by histidine 332, glutamate 333, aspartate 342, and alanine 344. A propeptide spanning residues serine 345 to asparagine 352 is cleaved from the precursor.

This sequence belongs to the reaction center PufL/M/PsbA/D family. In terms of assembly, PSII is composed of 1 copy each of membrane proteins PsbA, PsbB, PsbC, PsbD, PsbE, PsbF, PsbH, PsbI, PsbJ, PsbK, PsbL, PsbM, PsbT, PsbX, PsbY, PsbZ, Psb30/Ycf12, at least 3 peripheral proteins of the oxygen-evolving complex and a large number of cofactors. It forms dimeric complexes. It depends on The D1/D2 heterodimer binds P680, chlorophylls that are the primary electron donor of PSII, and subsequent electron acceptors. It shares a non-heme iron and each subunit binds pheophytin, quinone, additional chlorophylls, carotenoids and lipids. D1 provides most of the ligands for the Mn4-Ca-O5 cluster of the oxygen-evolving complex (OEC). There is also a Cl(-1) ion associated with D1 and D2, which is required for oxygen evolution. The PSII complex binds additional chlorophylls, carotenoids and specific lipids. as a cofactor. Tyr-161 forms a radical intermediate that is referred to as redox-active TyrZ, YZ or Y-Z. Post-translationally, C-terminally processed by CTPA; processing is essential to allow assembly of the oxygen-evolving complex and thus photosynthetic growth.

It is found in the plastid. It localises to the chloroplast thylakoid membrane. The catalysed reaction is 2 a plastoquinone + 4 hnu + 2 H2O = 2 a plastoquinol + O2. In terms of biological role, this is one of the two reaction center proteins of photosystem II. Its function is as follows. Photosystem II (PSII) is a light-driven water:plastoquinone oxidoreductase that uses light energy to abstract electrons from H(2)O, generating O(2) and a proton gradient subsequently used for ATP formation. It consists of a core antenna complex that captures photons, and an electron transfer chain that converts photonic excitation into a charge separation. The D1/D2 (PsbA/PsbD) reaction center heterodimer binds P680, the primary electron donor of PSII as well as several subsequent electron acceptors. This is Photosystem II protein D1 from Chlamydomonas reinhardtii (Chlamydomonas smithii).